Consider the following 250-residue polypeptide: Endonuclease NucS 2 (250 aa).

Belongs to the NucS endonuclease family.

Its subcellular location is the cytoplasm. Cleaves both 3' and 5' ssDNA extremities of branched DNA structures. In Halobacterium salinarum (strain ATCC 700922 / JCM 11081 / NRC-1) (Halobacterium halobium), this protein is Endonuclease NucS 2.